Here is a 349-residue protein sequence, read N- to C-terminus: DENN domain-containing protein 10 (349 aa).

In terms of domain architecture, uDENN spans 1–135; it reads MATPELMLSL…TKGICQSDEN (135 aa). The region spanning 160–294 is the cDENN domain; it reads QFGMETIILY…ADRSDAQVIK (135 aa). Residues 296-349 form the dDENN domain; it reads ISVKTKEILSNLMSLADHADNSKLTLECLKQGHYPPATENFLFHLAAAEQLLKI.

This sequence belongs to the DENND10 family.

The protein localises to the late endosome. Guanine nucleotide exchange factor (GEF) which may be involved in the regulation of late endocytic pathway homeostasis, including endosomal positioning, maturation and secretion. This Danio rerio (Zebrafish) protein is DENN domain-containing protein 10 (dennd10).